The following is a 159-amino-acid chain: Galactose-specific lectin nattectin (159 aa).

The first 21 residues, 1 to 21 (MASVPHFTVFLFLACALGIGA), serve as a signal peptide directing secretion. A propeptide spanning residues 22 to 24 (NVT) is cleaved from the precursor. 3 disulfide bridges follow: cysteine 31–cysteine 42, cysteine 59–cysteine 155, and cysteine 132–cysteine 147. Positions 38–156 (HGSRCFTFHR…CKVKRSFLCA (119 aa)) constitute a C-type lectin domain. Ca(2+) contacts are provided by glutamine 122, aspartate 124, glutamate 130, and asparagine 143. Positions 122–124 (QPD) match the Galactose-binding motif.

Monomer. Post-translationally, not glycosylated. As to expression, expressed by the venom gland.

It is found in the secreted. In terms of biological role, galactose specific lectin that exhibits hemagglutination activity (minimum hemagluttination concentration = 2.5 ug/well) in a calcium-independent fashion. Has remarkable pro-inflammatory activity, inducing neutrophil mobilization in mice. Plays a crucial role in the innate immune system and chronic manifestations, especially in neutrophil mobilization. This chain is Galactose-specific lectin nattectin, found in Thalassophryne nattereri (Copper Joe toadfish).